The sequence spans 407 residues: [Pyruvate dehydrogenase (acetyl-transferring)] kinase isozyme 2, mitochondrial (407 aa).

A Histidine kinase domain is found at 135 to 364 (LEYKDTYGDD…DAVIYLKALS (230 aa)). Y215 and Y216 each carry phosphotyrosine. Residues 251-258 (ELFKNAMR), D290, 309-310 (ST), and 325-330 (GFGYGL) each bind ATP. K376 bears the N6-succinyllysine mark.

It belongs to the PDK/BCKDK protein kinase family. Homodimer, and heterodimer with PDK1. Interacts with the pyruvate dehydrogenase complex subunit DLAT, and is part of the multimeric pyruvate dehydrogenase complex that contains multiple copies of pyruvate dehydrogenase (E1), dihydrolipoamide acetyltransferase (DLAT, E2) and lipoamide dehydrogenase (DLD, E3). Detected in heart (at protein level). Highest level of expression in heart and skeletal muscle and the lowest in spleen and lung. Liver, kidney, brain and testis levels are intermediate.

The protein resides in the mitochondrion matrix. The enzyme catalyses L-seryl-[pyruvate dehydrogenase E1 alpha subunit] + ATP = O-phospho-L-seryl-[pyruvate dehydrogenase E1 alpha subunit] + ADP + H(+). Activity increases in response to increased acetyl-CoA and NADH levels and upon binding to the pyruvate dehydrogenase subunit DLAT. Inhibited by ADP and pyruvate; these compounds interfere with DLAT binding and thereby inhibit kinase activity. Inhibited by dichloroacetate. Inhibited by AZD7545; this compound interferes with DLAT binding and thereby inhibits kinase activity. Reactive oxygen species cause the formation of disulfide bonds, and thereby inhibit the enzyme. Its function is as follows. Kinase that plays a key role in the regulation of glucose and fatty acid metabolism and homeostasis via phosphorylation of the pyruvate dehydrogenase subunits PDHA1 and PDHA2. This inhibits pyruvate dehydrogenase activity, and thereby regulates metabolite flux through the tricarboxylic acid cycle, down-regulates aerobic respiration and inhibits the formation of acetyl-coenzyme A from pyruvate. Inhibition of pyruvate dehydrogenase decreases glucose utilization and increases fat metabolism. Mediates cellular responses to insulin. Plays an important role in maintaining normal blood glucose levels and in metabolic adaptation to nutrient availability. Via its regulation of pyruvate dehydrogenase activity, plays an important role in maintaining normal blood pH and in preventing the accumulation of ketone bodies under starvation. Plays a role in the regulation of cell proliferation and in resistance to apoptosis under oxidative stress. Plays a role in p53/TP53-mediated apoptosis. This chain is [Pyruvate dehydrogenase (acetyl-transferring)] kinase isozyme 2, mitochondrial (Pdk2), found in Rattus norvegicus (Rat).